A 168-amino-acid chain; its full sequence is G/U mismatch-specific DNA glycosylase (168 aa).

It belongs to the uracil-DNA glycosylase (UDG) superfamily. TDG/mug family. In terms of assembly, binds DNA as a monomer.

The protein resides in the cytoplasm. The catalysed reaction is Specifically hydrolyzes mismatched double-stranded DNA and polynucleotides, releasing free uracil.. Excises ethenocytosine and uracil, which can arise by alkylation or deamination of cytosine, respectively, from the corresponding mispairs with guanine in ds-DNA. It is capable of hydrolyzing the carbon-nitrogen bond between the sugar-phosphate backbone of the DNA and the mispaired base. The complementary strand guanine functions in substrate recognition. Required for DNA damage lesion repair in stationary-phase cells. This is G/U mismatch-specific DNA glycosylase from Salmonella paratyphi B (strain ATCC BAA-1250 / SPB7).